Consider the following 150-residue polypeptide: uncharacterized protein (150 aa).

The region spanning 5–66 (LDKVDRRLLE…KPNYKKLNLG (62 aa)) is the HTH asnC-type domain. The H-T-H motif DNA-binding region spans 24-43 (IATLSKKLGIPRTTVHYRIK).

This is an uncharacterized protein from Pyrococcus abyssi (strain GE5 / Orsay).